A 230-amino-acid polypeptide reads, in one-letter code: Large ribosomal subunit protein uL1 (230 aa).

The protein belongs to the universal ribosomal protein uL1 family. In terms of assembly, part of the 50S ribosomal subunit.

Functionally, binds directly to 23S rRNA. The L1 stalk is quite mobile in the ribosome, and is involved in E site tRNA release. In terms of biological role, protein L1 is also a translational repressor protein, it controls the translation of the L11 operon by binding to its mRNA. The polypeptide is Large ribosomal subunit protein uL1 (Limosilactobacillus fermentum (strain NBRC 3956 / LMG 18251) (Lactobacillus fermentum)).